A 241-amino-acid chain; its full sequence is Zinc finger CCHC domain-containing protein 24 (241 aa).

Phosphoserine occurs at positions 65 and 93. Residues 132 to 149 (YLCHLCFNKGHYIKDCPQ) form a CCHC-type zinc finger.

The polypeptide is Zinc finger CCHC domain-containing protein 24 (ZCCHC24) (Homo sapiens (Human)).